The following is a 216-amino-acid chain: Large ribosomal subunit protein uL24m (216 aa).

The N-terminal 9 residues, 1–9 (MRLSALLAL), are a transit peptide targeting the mitochondrion. Ser-24 is modified (phosphoserine). In terms of domain architecture, KOW spans 56–89 (LFCGDRVEILEGKDAGKQGKVVQVIRQRNWVVVE).

It belongs to the universal ribosomal protein uL24 family. Component of the mitochondrial ribosome large subunit (39S) which comprises a 16S rRNA and about 50 distinct proteins.

Its subcellular location is the mitochondrion. The polypeptide is Large ribosomal subunit protein uL24m (MRPL24) (Bos taurus (Bovine)).